The chain runs to 368 residues: UDP-N-acetylglucosamine--N-acetylmuramyl-(pentapeptide) pyrophosphoryl-undecaprenol N-acetylglucosamine transferase (368 aa).

UDP-N-acetyl-alpha-D-glucosamine contacts are provided by residues 10-12 (TGG), asparagine 124, serine 196, isoleucine 251, and glutamine 296.

The protein belongs to the glycosyltransferase 28 family. MurG subfamily.

It is found in the cell membrane. It carries out the reaction Mur2Ac(oyl-L-Ala-gamma-D-Glu-L-Lys-D-Ala-D-Ala)-di-trans,octa-cis-undecaprenyl diphosphate + UDP-N-acetyl-alpha-D-glucosamine = beta-D-GlcNAc-(1-&gt;4)-Mur2Ac(oyl-L-Ala-gamma-D-Glu-L-Lys-D-Ala-D-Ala)-di-trans,octa-cis-undecaprenyl diphosphate + UDP + H(+). It participates in cell wall biogenesis; peptidoglycan biosynthesis. Cell wall formation. Catalyzes the transfer of a GlcNAc subunit on undecaprenyl-pyrophosphoryl-MurNAc-pentapeptide (lipid intermediate I) to form undecaprenyl-pyrophosphoryl-MurNAc-(pentapeptide)GlcNAc (lipid intermediate II). The chain is UDP-N-acetylglucosamine--N-acetylmuramyl-(pentapeptide) pyrophosphoryl-undecaprenol N-acetylglucosamine transferase from Limosilactobacillus fermentum (strain NBRC 3956 / LMG 18251) (Lactobacillus fermentum).